The sequence spans 161 residues: MSFMNSFKKLVGVEDDYDEYYDDQYYYDESDHVESESKDYEQKQNYETKSNIVSMNNSATKPVESKPLNRVKINIHEPISFDDAPKVIDVILKNEVAVLNIEMLEKDVKQRIFDFVSGAIYSLDGKMQKVTKDIFVLVPKGVEIDGKIKDQITKNNGFFQL.

Belongs to the SepF family. Homodimer. Interacts with FtsZ.

Its subcellular location is the cytoplasm. Its function is as follows. Cell division protein that is part of the divisome complex and is recruited early to the Z-ring. Probably stimulates Z-ring formation, perhaps through the cross-linking of FtsZ protofilaments. Its function overlaps with FtsA. This chain is Cell division protein SepF, found in Finegoldia magna (strain ATCC 29328 / DSM 20472 / WAL 2508) (Peptostreptococcus magnus).